The chain runs to 224 residues: Thiamine-phosphate synthase (224 aa).

4-amino-2-methyl-5-(diphosphooxymethyl)pyrimidine-binding positions include 44-48 and Asn79; that span reads QFREK. Positions 80 and 99 each coordinate Mg(2+). Ser117 is a binding site for 4-amino-2-methyl-5-(diphosphooxymethyl)pyrimidine. 143-145 provides a ligand contact to 2-[(2R,5Z)-2-carboxy-4-methylthiazol-5(2H)-ylidene]ethyl phosphate; sequence TET. Residue Lys146 participates in 4-amino-2-methyl-5-(diphosphooxymethyl)pyrimidine binding. 2-[(2R,5Z)-2-carboxy-4-methylthiazol-5(2H)-ylidene]ethyl phosphate is bound by residues Gly175 and 195-196; that span reads IS.

Belongs to the thiamine-phosphate synthase family. It depends on Mg(2+) as a cofactor.

It carries out the reaction 2-[(2R,5Z)-2-carboxy-4-methylthiazol-5(2H)-ylidene]ethyl phosphate + 4-amino-2-methyl-5-(diphosphooxymethyl)pyrimidine + 2 H(+) = thiamine phosphate + CO2 + diphosphate. The enzyme catalyses 2-(2-carboxy-4-methylthiazol-5-yl)ethyl phosphate + 4-amino-2-methyl-5-(diphosphooxymethyl)pyrimidine + 2 H(+) = thiamine phosphate + CO2 + diphosphate. The catalysed reaction is 4-methyl-5-(2-phosphooxyethyl)-thiazole + 4-amino-2-methyl-5-(diphosphooxymethyl)pyrimidine + H(+) = thiamine phosphate + diphosphate. It functions in the pathway cofactor biosynthesis; thiamine diphosphate biosynthesis; thiamine phosphate from 4-amino-2-methyl-5-diphosphomethylpyrimidine and 4-methyl-5-(2-phosphoethyl)-thiazole: step 1/1. Functionally, condenses 4-methyl-5-(beta-hydroxyethyl)thiazole monophosphate (THZ-P) and 2-methyl-4-amino-5-hydroxymethyl pyrimidine pyrophosphate (HMP-PP) to form thiamine monophosphate (TMP). This Bacillus velezensis (strain DSM 23117 / BGSC 10A6 / LMG 26770 / FZB42) (Bacillus amyloliquefaciens subsp. plantarum) protein is Thiamine-phosphate synthase.